We begin with the raw amino-acid sequence, 504 residues long: Fibroblast growth factor receptor-like 1 (504 aa).

Residues 1 to 24 (MTPSPLLLLLLPPLLLGAFPPAAA) form the signal peptide. Over 25–378 (ARGPPKMADK…SSSATSLPWP (354 aa)) the chain is Extracellular. Residues 29 to 115 (PKMADKVVPR…GSLSVNYTLV (87 aa)) form the Ig-like C2-type 1 domain. Cysteines 51 and 99 form a disulfide. A glycan (N-linked (GlcNAc...) asparagine) is linked at asparagine 111. Residues 123 to 155 (GKESLGPDSSSGGQEDPASQQWARPRFTQPSKM) are disordered. The span at 129 to 144 (PDSSSGGQEDPASQQW) shows a compositional bias: polar residues. 2 Ig-like C2-type domains span residues 147 to 237 (PRFT…YKVD) and 246 to 354 (PVLT…AFLT). Cysteines 172 and 221 form a disulfide. 3 N-linked (GlcNAc...) asparagine glycosylation sites follow: asparagine 231, asparagine 255, and asparagine 293. The cysteines at positions 268 and 338 are disulfide-linked. The helical transmembrane segment at 379–399 (VVIGIPAGAVFILGTLLLWLC) threads the bilayer. The Cytoplasmic portion of the chain corresponds to 400-504 (QAQKKPCTPA…KVHQHIHYQC (105 aa)). Positions 407–418 (TPAPAPPLPGHR) are enriched in pro residues. Residues 407–435 (TPAPAPPLPGHRPPGTARDRSGDKDLPSL) form a disordered region. Residues 423–432 (ARDRSGDKDL) show a composition bias toward basic and acidic residues.

In terms of assembly, interacts with FGF2 with a low affinity. As to expression, expressed preferentially in cartilaginous tissues and pancreas. Highly expressed in the liver, kidney, heart, brain and skeletal muscle. Weakly expressed in the lung, small intestine and spleen.

It is found in the membrane. Has a negative effect on cell proliferation. In Homo sapiens (Human), this protein is Fibroblast growth factor receptor-like 1 (FGFRL1).